The sequence spans 220 residues: Ribose-5-phosphate isomerase A (220 aa).

Substrate is bound by residues 28–31, 81–84, and 94–97; these read TGST, DGAD, and KGGG. Residue glutamate 103 is the Proton acceptor of the active site. Residue lysine 121 participates in substrate binding.

Belongs to the ribose 5-phosphate isomerase family. Homodimer.

The enzyme catalyses aldehydo-D-ribose 5-phosphate = D-ribulose 5-phosphate. It participates in carbohydrate degradation; pentose phosphate pathway; D-ribose 5-phosphate from D-ribulose 5-phosphate (non-oxidative stage): step 1/1. Functionally, catalyzes the reversible conversion of ribose-5-phosphate to ribulose 5-phosphate. The sequence is that of Ribose-5-phosphate isomerase A from Shewanella baltica (strain OS185).